Here is a 183-residue protein sequence, read N- to C-terminus: Dual specificity protein phosphatase 22-B (183 aa).

The Tyrosine-protein phosphatase domain maps to 4 to 144 (GINKVLPDLY…LQEFQTGELQ (141 aa)). The active-site Phosphocysteine intermediate is Cys88.

The protein belongs to the protein-tyrosine phosphatase family. Non-receptor class dual specificity subfamily.

The protein resides in the cytoplasm. It localises to the nucleus. The catalysed reaction is O-phospho-L-tyrosyl-[protein] + H2O = L-tyrosyl-[protein] + phosphate. It carries out the reaction O-phospho-L-seryl-[protein] + H2O = L-seryl-[protein] + phosphate. It catalyses the reaction O-phospho-L-threonyl-[protein] + H2O = L-threonyl-[protein] + phosphate. Activates the Jnk signaling pathway. Dephosphorylates and deactivates p38 and stress-activated protein kinase/c-Jun N-terminal kinase (SAPK/JNK). The polypeptide is Dual specificity protein phosphatase 22-B (dusp22b) (Danio rerio (Zebrafish)).